The chain runs to 439 residues: MESSIEKLEGLAHKLTVEIPAGDIDQAVTQRLKSLRPRLRIDGFRPGKVPPHIIKQRYGISARQDVLGDEIDRSYREIISKSDYAPVAPPQIELISGFKEGEALKFEAIFEVMPEVVVNGLDALDITLPDAQLSDKDVDEMIDTLRRQRANFVESDKIAGNGDRLTLDFIGTLNGEPFEGGKGEDFCFNLGSGQMLPDFERGLQGMKAGEEKSFDVQFPEDYPSENLAGKTAQFAATLKKVEAMILPEVDESFIKAFGIASGDAADFRRAIRDNMSRELEKAKRRIKRERLFDAILEKNADQIVPNASLHQEMERMAKEFNLEKQIPDTEKRHQLMHQLFEKNAKRRIQLGLLLGKLFDERQIEIDQSRVQERLESIAATYEDPEEVKKWYQNDEKSRRDLEAVILEEQLIDQLYEKAKVSYETRSFQEIMAVNAQIHG.

A PPIase FKBP-type domain is found at 162–247; it reads GDRLTLDFIG…LKKVEAMILP (86 aa).

This sequence belongs to the FKBP-type PPIase family. Tig subfamily.

The protein resides in the cytoplasm. The catalysed reaction is [protein]-peptidylproline (omega=180) = [protein]-peptidylproline (omega=0). Involved in protein export. Acts as a chaperone by maintaining the newly synthesized protein in an open conformation. Functions as a peptidyl-prolyl cis-trans isomerase. This chain is Trigger factor, found in Dichelobacter nodosus (strain VCS1703A).